Here is a 1063-residue protein sequence, read N- to C-terminus: Structural polyprotein (1063 aa).

The tract at residues 1–131 (MASTTPITME…LGPPTNPFQA (131 aa)) is disordered. Residues 30–69 (GASQSRRPRPPRQRDSSTSGDDSGRDSGGPRRRRGNRGRG) form a human C1QBP/SF2P32-binding region. Position 46 is a phosphoserine; by host (Ser46). Residues 70–87 (QLRDWSRAPPPPEERQES) are compositionally biased toward basic and acidic residues. Positions 93–107 (APKPSRAPPQQPQPP) are enriched in pro residues. Cys153 and Cys197 are oxidised to a cystine. Positions 279–300 (GAPQAFLAGLLLAAVAVGTARA) are functions as E2 signal peptide. Residues 301-534 (GLQPRADMAA…LWLATANALS (234 aa)) are Extracellular-facing. Residues Asn353, Asn371, Asn410, and Asn429 are each glycosylated (N-linked (GlcNAc...) asparagine; by host). The helical transmembrane segment at 535-555 (LDHALAAFVLLVPWVLIFMVC) threads the bilayer. The Cytoplasmic portion of the chain corresponds to 556-582 (RRACRRRGAAAALTAVVLQGYNPPAYG). The tract at residues 563 to 582 (GAAAALTAVVLQGYNPPAYG) is functions as E1 signal peptide. Residues 583–1028 (EEAFTYLCTA…QTWAEWAAAH (446 aa)) lie on the Extracellular side of the membrane. Cystine bridges form between Cys590–Cys595, Cys619–Cys824, Cys641–Cys653, Cys699–Cys712, Cys758–Cys767, Cys807–Cys817, Cys931–Cys934, and Cys950–Cys983. A glycan (N-linked (GlcNAc...) asparagine; by host) is linked at Asn658. Ca(2+)-binding residues include Asn670 and Ala671. Positions 718 and 719 each coordinate Ca(2+). 2 N-linked (GlcNAc...) asparagine; by host glycosylation sites follow: Asn759 and Asn791. 2 O-linked (GalNAc...) threonine; by host glycosylation sites follow: Thr1011 and Thr1012. A helical transmembrane segment spans residues 1029-1049 (WWQLTLGAICALLLAGLLACC). Residues 1050 to 1063 (AKCLYYLRGAIAPR) are Extracellular-facing.

As to quaternary structure, homodimer; further assembles into homooligomer. Interacts with human C1QBP. Interacts (via N-terminus) with protease/methyltransferase p150. In terms of assembly, heterodimer with spike glycoprotein E2. Heterodimer with spike glycoprotein E1. Structural polyprotein: Specific enzymatic cleavages in vivo yield mature proteins. Two signal peptidase-mediated cleavages within the polyprotein produce the structural proteins capsid, E2, and E1. The E2 signal peptide remains attached to the C-terminus of the capsid protein after cleavage by the signal peptidase. Another signal peptide at E2 C-terminus directs E1 to the ER, with a similar mechanism. In terms of processing, contains three N-linked oligosaccharides. Post-translationally, capsid is phosphorylated on Ser-46 by host. This phosphorylation negatively regulates capsid protein RNA-binding activity. Dephosphorylated by human PP1A.

It localises to the virion. The protein localises to the host cytoplasm. The protein resides in the host mitochondrion. Its subcellular location is the virion membrane. It is found in the host Golgi apparatus membrane. Its function is as follows. Capsid protein interacts with genomic RNA and assembles into icosahedric core particles 65-70 nm in diameter. The resulting nucleocapsid eventually associates with the cytoplasmic domain of E2 at the cell membrane, leading to budding and formation of mature virions from host Golgi membranes. Phosphorylation negatively regulates RNA-binding activity, possibly delaying virion assembly during the viral replication phase. Capsid protein dimerizes and becomes disulfide-linked in the virion. Modulates genomic RNA replication. Modulates subgenomic RNA synthesis by interacting with human C1QBP/SF2P32. Induces both perinuclear clustering of mitochondria and the formation of electron-dense intermitochondrial plaques, both hallmarks of rubella virus infected cells. Induces apoptosis when expressed in transfected cells. In terms of biological role, responsible for viral attachment to target host cell, by binding to the cell receptor. Its transport to the plasma membrane depends on interaction with E1 protein. The surface glycoproteins display an irregular helical organization and a pseudo-tetrameric inner nucleocapsid arrangement. Class II viral fusion protein. Fusion activity is inactive as long as E1 is bound to E2 in mature virion. After virus attachment to target cell and clathrin-mediated endocytosis, acidification of the endosome would induce dissociation of E1/E2 heterodimer and concomitant trimerization of the E1 subunits. This E1 homotrimer is fusion active, and promotes release of viral nucleocapsid in cytoplasm after endosome and viral membrane fusion. The cytoplasmic tail of spike glycoprotein E1 modulates virus release. The surface glycoproteins display an irregular helical organization and a pseudo-tetrameric inner nucleocapsid arrangement. This Homo sapiens (Human) protein is Structural polyprotein.